A 392-amino-acid polypeptide reads, in one-letter code: Nucleolysin TIAR (392 aa).

RRM domains follow at residues 9 to 102 (RTLY…WATT) and 114 to 192 (FHVF…WATR). At Lys139 the chain carries N6-acetyllysine. Ser218 is modified (phosphoserine). One can recognise an RRM 3 domain in the interval 222–294 (CTVYCGGIAS…HVVKCYWGKE (73 aa)). Residues 363-392 (GAQPPQGQAPPPVIPPPNQAGYGMASFPTQ) are disordered. Residues 369–380 (GQAPPPVIPPPN) show a composition bias toward pro residues.

As to quaternary structure, interacts with FASTK. Phosphorylated by MAPK14 following DNA damage, releasing TIAR from GADD45A mRNA. Expressed both in primordial germ cells (PGCs) and in neighboring somatic cells.

It is found in the nucleus. It localises to the cytoplasm. Its subcellular location is the stress granule. The protein resides in the cytolytic granule. In terms of biological role, RNA-binding protein involved in alternative pre-RNA splicing and in cytoplasmic stress granules formation. Shows a preference for uridine-rich RNAs. Activates splicing of alternative exons with weak 5' splice sites followed by a U-rich stretch on its own pre-mRNA and on TIA1 mRNA. Promotes the inclusion of TIA1 exon 5 to give rise to the long isoform (isoform a) of TIA1. Acts downstream of the stress-induced phosphorylation of EIF2S1/EIF2A to promote the recruitment of untranslated mRNAs to cytoplasmic stress granules (SG). Possesses nucleolytic activity against cytotoxic lymphocyte target cells. May be involved in apoptosis. The chain is Nucleolysin TIAR (Tial1) from Mus musculus (Mouse).